The chain runs to 146 residues: Large-conductance mechanosensitive channel (146 aa).

Transmembrane regions (helical) follow at residues V21–I41, V44–G64, and G83–V103.

The protein belongs to the MscL family. As to quaternary structure, homopentamer.

It localises to the cell inner membrane. Its function is as follows. Channel that opens in response to stretch forces in the membrane lipid bilayer. May participate in the regulation of osmotic pressure changes within the cell. The polypeptide is Large-conductance mechanosensitive channel (Cereibacter sphaeroides (strain ATCC 17025 / ATH 2.4.3) (Rhodobacter sphaeroides)).